Reading from the N-terminus, the 278-residue chain is Deoxyuridine 5'-triphosphate nucleotidohydrolase (278 aa).

Substrate contacts are provided by residues 171-173 (RSG) and 273-274 (FG).

The protein belongs to the dUTPase family. The cofactor is Mg(2+).

It catalyses the reaction dUTP + H2O = dUMP + diphosphate + H(+). Functionally, involved in nucleotide metabolism: produces dUMP, the immediate precursor of thymidine nucleotides and decreases the intracellular concentration of dUTP to avoid uracil incorporation into viral DNA. In Homo sapiens (Human), this protein is Deoxyuridine 5'-triphosphate nucleotidohydrolase.